The following is a 180-amino-acid chain: ATP-dependent protease subunit HslV (180 aa).

T7 is an active-site residue. Na(+)-binding residues include G165, C168, and T171.

The protein belongs to the peptidase T1B family. HslV subfamily. In terms of assembly, a double ring-shaped homohexamer of HslV is capped on each side by a ring-shaped HslU homohexamer. The assembly of the HslU/HslV complex is dependent on binding of ATP.

It is found in the cytoplasm. It catalyses the reaction ATP-dependent cleavage of peptide bonds with broad specificity.. Its activity is regulated as follows. Allosterically activated by HslU binding. Its function is as follows. Protease subunit of a proteasome-like degradation complex believed to be a general protein degrading machinery. The polypeptide is ATP-dependent protease subunit HslV (Bacillus cereus (strain G9842)).